Reading from the N-terminus, the 439-residue chain is Enolase 1 (439 aa).

Substrate-binding residues include His-160 and Glu-169. The active-site Proton donor is Glu-212. Residues Asp-247, Glu-296, and Asp-323 each coordinate Mg(2+). Substrate contacts are provided by Glu-296 and Asp-323. Catalysis depends on Lys-348, which acts as the Proton acceptor. Residues 375–378 and Lys-399 each bind substrate; that span reads SHRS.

This sequence belongs to the enolase family. In terms of assembly, homodimer. The cofactor is Mg(2+).

It localises to the cytoplasm. It catalyses the reaction (2R)-2-phosphoglycerate = phosphoenolpyruvate + H2O. It functions in the pathway carbohydrate degradation; glycolysis; pyruvate from D-glyceraldehyde 3-phosphate: step 4/5. The sequence is that of Enolase 1 (ENO1) from Debaryomyces hansenii (strain ATCC 36239 / CBS 767 / BCRC 21394 / JCM 1990 / NBRC 0083 / IGC 2968) (Yeast).